A 158-amino-acid chain; its full sequence is SsrA-binding protein (158 aa).

Belongs to the SmpB family.

It localises to the cytoplasm. Its function is as follows. Required for rescue of stalled ribosomes mediated by trans-translation. Binds to transfer-messenger RNA (tmRNA), required for stable association of tmRNA with ribosomes. tmRNA and SmpB together mimic tRNA shape, replacing the anticodon stem-loop with SmpB. tmRNA is encoded by the ssrA gene; the 2 termini fold to resemble tRNA(Ala) and it encodes a 'tag peptide', a short internal open reading frame. During trans-translation Ala-aminoacylated tmRNA acts like a tRNA, entering the A-site of stalled ribosomes, displacing the stalled mRNA. The ribosome then switches to translate the ORF on the tmRNA; the nascent peptide is terminated with the 'tag peptide' encoded by the tmRNA and targeted for degradation. The ribosome is freed to recommence translation, which seems to be the essential function of trans-translation. This Bartonella tribocorum (strain CIP 105476 / IBS 506) protein is SsrA-binding protein.